Consider the following 440-residue polypeptide: Microtubule-associated tumor suppressor 1 homolog (440 aa).

Residues 106–401 are a coiled coil; sequence IQHLLSEREE…RLSMENEELL (296 aa). Phosphoserine is present on residues Ser373, Ser394, Ser415, Ser425, Ser429, Ser431, Ser433, Ser434, and Ser438. The interval 407–440 is disordered; the sequence is GDLCSPKRSPTSSAIPFQSPRNSGSFSSPSISPR. Residues 425-440 show a composition bias toward low complexity; sequence SPRNSGSFSSPSISPR.

The protein belongs to the MTUS1 family. Homodimer. Interacts with AGTR2. Interacts with PTPN6. In terms of tissue distribution, present in neurons (at protein level).

Its subcellular location is the mitochondrion. It is found in the golgi apparatus. The protein resides in the cell membrane. It localises to the nucleus. Cooperates with AGTR2 to inhibit ERK2 activation and cell proliferation. May be required for AGTR2 cell surface expression. Together with PTPN6, induces UBE2V2 expression upon angiotensin-II stimulation. This Rattus norvegicus (Rat) protein is Microtubule-associated tumor suppressor 1 homolog (Mtus1).